The chain runs to 888 residues: Pumilio homology domain family member 4 (888 aa).

T205, T212, and T252 each carry phosphothreonine. 2 disordered regions span residues K236–T270 and M467–E551. Over residues G243 to T270 the composition is skewed to polar residues. Residue S256 is modified to Phosphoserine. Composition is skewed to low complexity over residues N478 to K499 and N521 to S543. One can recognise a PUM-HD domain in the interval T539–S888. Pumilio repeat units lie at residues Q563–E598, E599–K634, I635–D671, S672–D707, A708–D743, K744–H783, L784–N821, and G823–E861.

Is not essential for haploid growth, but may affect diploid formation. This chain is Pumilio homology domain family member 4 (PUF4), found in Saccharomyces cerevisiae (strain ATCC 204508 / S288c) (Baker's yeast).